Consider the following 223-residue polypeptide: uncharacterized protein (223 aa).

The first 22 residues, 1–22 (MHLKKALCPALCTFLIHLCLHA), serve as a signal peptide directing secretion. The region spanning 30 to 204 (DIFLMIDKSR…RSIAAAHSKR (175 aa)) is the VWFA domain. The disordered stretch occupies residues 199–223 (AAHSKRPTPTPPAKESSPRYTPSLD).

This is an uncharacterized protein from Treponema pallidum (strain Nichols).